We begin with the raw amino-acid sequence, 297 residues long: ER membrane protein complex subunit 2 (297 aa).

N-acetylalanine is present on A2. TPR repeat units lie at residues 87 to 120 (HRVKRLTGMRFEAMERYDDAIQLYDRILQEDPTN), 155 to 188 (QEAWHELAELYINEHDYAKAAFCLEELMMTNPHN), and 192 to 225 (CQQYAEVKYTQGGLENLELSRKYFAQALKLNNRN). K255 carries the N6-acetyllysine modification.

It belongs to the EMC2 family. In terms of assembly, component of the ER membrane protein complex (EMC). Interacts with WNK1 (via amphipathic alpha-helix region); promoting the ER membrane protein complex assembly by preventing EMC2 ubiquitination. In terms of processing, ubiquitinated when soluble in the cytoplasm, leading to its degradation by the proteasome. Interaction with EMC2 prevents its ubiquitination and degradation.

The protein localises to the endoplasmic reticulum membrane. In terms of biological role, part of the endoplasmic reticulum membrane protein complex (EMC) that enables the energy-independent insertion into endoplasmic reticulum membranes of newly synthesized membrane proteins. Preferentially accommodates proteins with transmembrane domains that are weakly hydrophobic or contain destabilizing features such as charged and aromatic residues. Involved in the cotranslational insertion of multi-pass membrane proteins in which stop-transfer membrane-anchor sequences become ER membrane spanning helices. It is also required for the post-translational insertion of tail-anchored/TA proteins in endoplasmic reticulum membranes. By mediating the proper cotranslational insertion of N-terminal transmembrane domains in an N-exo topology, with translocated N-terminus in the lumen of the ER, controls the topology of multi-pass membrane proteins like the G protein-coupled receptors. By regulating the insertion of various proteins in membranes, it is indirectly involved in many cellular processes. The chain is ER membrane protein complex subunit 2 from Pongo abelii (Sumatran orangutan).